The sequence spans 460 residues: Muscarinic acetylcholine receptor M1 (460 aa).

Over Met1–Pro22 the chain is Extracellular. N-linked (GlcNAc...) asparagine glycosylation is found at Asn2 and Asn12. Residues Trp23–Ile48 form a helical membrane-spanning segment. Topologically, residues Ser49–Tyr62 are cytoplasmic. A helical transmembrane segment spans residues Phe63–Thr84. Residues Tyr85 to Thr95 lie on the Extracellular side of the membrane. A helical membrane pass occupies residues Leu96–Phe121. A disulfide bond links Cys98 and Cys178. At Asp122–Ala142 the chain is on the cytoplasmic side. The helical transmembrane segment at Ala143–Trp164 threads the bilayer. Residues Gln165–Gln185 lie on the Extracellular side of the membrane. Residues Pro186–Trp209 form a helical membrane-spanning segment. Topologically, residues Arg210–Thr366 are cytoplasmic. Disordered stretches follow at residues Leu225–Pro256, Trp274–Pro296, and Glu310–Lys351. The residue at position 230 (Thr230) is a Phosphothreonine. Low complexity predominate over residues Ser238–Gly247. Residues Arg328 to Pro343 show a composition bias toward basic residues. A helical transmembrane segment spans residues Leu367–Phe390. At Cys391–Glu397 the chain is on the extracellular side. A helical membrane pass occupies residues Thr398–Leu420. Topologically, residues Cys421–Cys460 are cytoplasmic. Thr428 carries the phosphothreonine modification. Ser451 is subject to Phosphoserine. Position 455 is a phosphothreonine (Thr455). Ser457 bears the Phosphoserine mark.

The protein belongs to the G-protein coupled receptor 1 family. Muscarinic acetylcholine receptor subfamily. CHRM1 sub-subfamily. Interacts with GPRASP2. Interacts with TMEM147.

Its subcellular location is the cell membrane. It is found in the postsynaptic cell membrane. The muscarinic acetylcholine receptor mediates various cellular responses, including inhibition of adenylate cyclase, breakdown of phosphoinositides and modulation of potassium channels through the action of G proteins. Primary transducing effect is Pi turnover. In Sus scrofa (Pig), this protein is Muscarinic acetylcholine receptor M1 (CHRM1).